Here is a 330-residue protein sequence, read N- to C-terminus: GMP reductase (330 aa).

Cys-180 acts as the Thioimidate intermediate in catalysis. 209–232 is an NADP(+) binding site; that stretch reads LIADGGIRHNGDIAKSVRFGASMV.

The protein belongs to the IMPDH/GMPR family. GuaC type 2 subfamily.

It carries out the reaction IMP + NH4(+) + NADP(+) = GMP + NADPH + 2 H(+). Its function is as follows. Catalyzes the irreversible NADPH-dependent deamination of GMP to IMP. It functions in the conversion of nucleobase, nucleoside and nucleotide derivatives of G to A nucleotides, and in maintaining the intracellular balance of A and G nucleotides. The chain is GMP reductase from Lactobacillus delbrueckii subsp. bulgaricus (strain ATCC BAA-365 / Lb-18).